A 367-amino-acid chain; its full sequence is Apurinic-apyrimidinic endonuclease 1 (367 aa).

His-83, His-123, Glu-158, Asp-192, His-195, His-229, Asp-242, His-244, and Glu-274 together coordinate Zn(2+). Positions 312–367 are disordered; the sequence is DTLQKLGAKSRKEQLDKFEVKQKKRAGGTKRKKATAEPSDNDILSQMTKKRKTKKE. Basic and acidic residues predominate over residues 321 to 332; it reads SRKEQLDKFEVK. Residues 333–344 show a composition bias toward basic residues; it reads QKKRAGGTKRKK. Ser-356 is subject to Phosphoserine.

Belongs to the AP endonuclease 2 family. Monomer. Zn(2+) is required as a cofactor.

It is found in the nucleus. Its function is as follows. DNA repair enzyme that cleaves apurinic/apyrimidinic (AP) sites and removes 3'-blocking groups present at single strand breaks of damaged DNA. APN1 accounts for &gt; 97% of both apurinic/apyrimidinic (AP) endonuclease and DNA 3'-repair diesterase activities. This Saccharomyces cerevisiae (strain ATCC 204508 / S288c) (Baker's yeast) protein is Apurinic-apyrimidinic endonuclease 1 (APN1).